Consider the following 376-residue polypeptide: DNA-directed RNA polymerase subunit alpha (376 aa).

The alpha N-terminal domain (alpha-NTD) stretch occupies residues 1–259 (MSDNSQNLLY…KHFSIFEKMD (259 aa)). The tract at residues 276-376 (KDDILHKLVL…EKIRSKNVKG (101 aa)) is alpha C-terminal domain (alpha-CTD).

It belongs to the RNA polymerase alpha chain family. As to quaternary structure, homodimer. The RNAP catalytic core consists of 2 alpha, 1 beta, 1 beta' and 1 omega subunit. When a sigma factor is associated with the core the holoenzyme is formed, which can initiate transcription.

It carries out the reaction RNA(n) + a ribonucleoside 5'-triphosphate = RNA(n+1) + diphosphate. DNA-dependent RNA polymerase catalyzes the transcription of DNA into RNA using the four ribonucleoside triphosphates as substrates. In Chlamydia felis (strain Fe/C-56) (Chlamydophila felis), this protein is DNA-directed RNA polymerase subunit alpha.